Here is a 632-residue protein sequence, read N- to C-terminus: tRNA 5-methylaminomethyl-2-thiouridine biosynthesis bifunctional protein MnmC (632 aa).

The interval 1–247 (MNSRIFPAAM…KWHMTLGQRL (247 aa)) is tRNA (mnm(5)s(2)U34)-methyltransferase. Positions 267 to 632 (VGAGLAGAAV…TDLLAQIAPR (366 aa)) are FAD-dependent cmnm(5)s(2)U34 oxidoreductase.

In the N-terminal section; belongs to the methyltransferase superfamily. tRNA (mnm(5)s(2)U34)-methyltransferase family. This sequence in the C-terminal section; belongs to the DAO family. It depends on FAD as a cofactor.

It is found in the cytoplasm. The catalysed reaction is 5-aminomethyl-2-thiouridine(34) in tRNA + S-adenosyl-L-methionine = 5-methylaminomethyl-2-thiouridine(34) in tRNA + S-adenosyl-L-homocysteine + H(+). Its function is as follows. Catalyzes the last two steps in the biosynthesis of 5-methylaminomethyl-2-thiouridine (mnm(5)s(2)U) at the wobble position (U34) in tRNA. Catalyzes the FAD-dependent demodification of cmnm(5)s(2)U34 to nm(5)s(2)U34, followed by the transfer of a methyl group from S-adenosyl-L-methionine to nm(5)s(2)U34, to form mnm(5)s(2)U34. This chain is tRNA 5-methylaminomethyl-2-thiouridine biosynthesis bifunctional protein MnmC, found in Bordetella bronchiseptica (strain ATCC BAA-588 / NCTC 13252 / RB50) (Alcaligenes bronchisepticus).